The chain runs to 147 residues: Hemoglobin subunit delta (147 aa).

The 145-residue stretch at 3–147 (HLTPEEKALV…VANALAHKYH (145 aa)) folds into the Globin domain. Ser-51 bears the Phosphoserine mark. Residues His-64 and His-93 each contribute to the heme b site.

It belongs to the globin family. As to quaternary structure, heterotetramer of two delta chains and two alpha chains. As to expression, red blood cells.

The protein is Hemoglobin subunit delta (HBD) of Trichechus manatus (Caribbean manatee).